Consider the following 298-residue polypeptide: MRAPSTSANLGSGFDVVAVAHDAYFAEAYIKLTSGCGVDIKFRGFNPGSDNTVKRAFQHLFERLGRCWGVEAEVVNNIPIARGLGSSGASAVAALAAFIREAGLRVEPAVVVEAAGLGEVAAAGSPHFDNVAAAALGGAVVIASVKPLELVKFMPKLIFVIGVPDVPPMPEKTKVMRSVLPREVSFRTYVAQLARVSALVAGFAKSDPRLVALGMSDEVVEPARAPYVPAYGRVKRYALEAGALAVSISGAGPSIIALVEEKNSDVVKAAVERAYIEEGLRAEVKVASITEGALAQNI.

79 to 89 is a binding site for ATP; that stretch reads PIARGLGSSGA.

Belongs to the GHMP kinase family. Homoserine kinase subfamily.

The protein resides in the cytoplasm. The catalysed reaction is L-homoserine + ATP = O-phospho-L-homoserine + ADP + H(+). It functions in the pathway amino-acid biosynthesis; L-threonine biosynthesis; L-threonine from L-aspartate: step 4/5. In terms of biological role, catalyzes the ATP-dependent phosphorylation of L-homoserine to L-homoserine phosphate. The polypeptide is Homoserine kinase (Pyrobaculum islandicum (strain DSM 4184 / JCM 9189 / GEO3)).